We begin with the raw amino-acid sequence, 346 residues long: Biotin synthase (346 aa).

The region spanning 38-256 (RQVQVSTLLS…IAVARIMMPT (219 aa)) is the Radical SAM core domain. 3 residues coordinate [4Fe-4S] cluster: cysteine 53, cysteine 57, and cysteine 60. Residues cysteine 97, cysteine 128, cysteine 188, and arginine 260 each contribute to the [2Fe-2S] cluster site.

Belongs to the radical SAM superfamily. Biotin synthase family. In terms of assembly, homodimer. It depends on [4Fe-4S] cluster as a cofactor. Requires [2Fe-2S] cluster as cofactor.

It carries out the reaction (4R,5S)-dethiobiotin + (sulfur carrier)-SH + 2 reduced [2Fe-2S]-[ferredoxin] + 2 S-adenosyl-L-methionine = (sulfur carrier)-H + biotin + 2 5'-deoxyadenosine + 2 L-methionine + 2 oxidized [2Fe-2S]-[ferredoxin]. Its pathway is cofactor biosynthesis; biotin biosynthesis; biotin from 7,8-diaminononanoate: step 2/2. In terms of biological role, catalyzes the conversion of dethiobiotin (DTB) to biotin by the insertion of a sulfur atom into dethiobiotin via a radical-based mechanism. This Shigella dysenteriae serotype 1 (strain Sd197) protein is Biotin synthase.